Here is a 474-residue protein sequence, read N- to C-terminus: tRNA (guanine(37)-N(1))-methyltransferase (474 aa).

Residues His-234, 274 to 275, 303 to 304, and Asn-345 each bind S-adenosyl-L-methionine; these read DL and DA. The segment covering 452–464 has biased composition (acidic residues); the sequence is EPEAQCESEEAEE. The disordered stretch occupies residues 452 to 474; it reads EPEAQCESEEAEEPSSKRIKVDT. Over residues 465–474 the composition is skewed to basic and acidic residues; sequence PSSKRIKVDT.

This sequence belongs to the class I-like SAM-binding methyltransferase superfamily. TRM5/TYW2 family. Monomer.

The protein localises to the mitochondrion matrix. The protein resides in the nucleus. It localises to the cytoplasm. It carries out the reaction guanosine(37) in tRNA + S-adenosyl-L-methionine = N(1)-methylguanosine(37) in tRNA + S-adenosyl-L-homocysteine + H(+). Specifically methylates the N1 position of guanosine-37 in various cytoplasmic and mitochondrial tRNAs. Methylation is not dependent on the nature of the nucleoside 5' of the target nucleoside. This is the first step in the biosynthesis of wybutosine (yW), a modified base adjacent to the anticodon of tRNAs and required for accurate decoding. This chain is tRNA (guanine(37)-N(1))-methyltransferase, found in Caenorhabditis elegans.